Here is a 154-residue protein sequence, read N- to C-terminus: MAARLCCQLDPARDVLCLRPVGAESCGRPLSWSLGALPPSSPPAVPADDGSHLSLRGLPACAFSSAGPCALRFTSARRMETTVNAPWNLPTTLHKRTLGLSPRSTTWIEEYIKDCVFKDWEESGEELRLKVFVLGGCRHKLVCSPAPCNFFTSA.

The mitochondrial targeting sequence stretch occupies residues 68–117; the sequence is PCALRFTSARRMETTVNAPWNLPTTLHKRTLGLSPRSTTWIEEYIKDCVF.

The protein belongs to the orthohepadnavirus protein X family. As to quaternary structure, may form homodimer. May interact with host CEBPA, CFLAR, CREB1, DDB1, E4F1, HBXIP, HSPD1/HSP60, NFKBIA, POLR2E and SMAD4. Interacts with host SMC5-SMC6 complex and induces its degradation. Interacts with host TRPC4AP; leading to prevent ubiquitination of TRPC4AP. Interacts with host PLSCR1; this interaction promotes ubiquitination and degradation of HBx and impairs HBx-mediated cell proliferation. Post-translationally, a fraction may be phosphorylated in insect cells and HepG2 cells, a human hepatoblastoma cell line. Phosphorylated in vitro by host protein kinase C or mitogen-activated protein kinase. N-acetylated in insect cells.

The protein resides in the host cytoplasm. The protein localises to the host nucleus. Its subcellular location is the host mitochondrion. In terms of biological role, multifunctional protein that plays a role in silencing host antiviral defenses and promoting viral transcription. Does not seem to be essential for HBV infection. May be directly involved in development of cirrhosis and liver cancer (hepatocellular carcinoma). Most of cytosolic activities involve modulation of cytosolic calcium. The effect on apoptosis is controversial depending on the cell types in which the studies have been conducted. May induce apoptosis by localizing in mitochondria and causing loss of mitochondrial membrane potential. May also modulate apoptosis by binding host CFLAR, a key regulator of the death-inducing signaling complex (DISC). Promotes viral transcription by using the host E3 ubiquitin ligase DDB1 to target the SMC5-SMC6 complex to proteasomal degradation. This host complex would otherwise bind to viral episomal DNA, and prevents its transcription. Moderately stimulates transcription of many different viral and cellular transcription elements. Promoters and enhancers stimulated by HBx contain DNA binding sites for NF-kappa-B, AP-1, AP-2, c-EBP, ATF/CREB, or the calcium-activated factor NF-AT. The protein is Protein X of Homo sapiens (Human).